Reading from the N-terminus, the 351-residue chain is MTIAIGQEKTRGRFDLIDDWVKRDRFVFVGWSGLLLFPCSYLALGGWLTGTTFVTSWYTHGLASSYLEGCNFLTSAVSTPANSMGHSLLLLWGPEAQGDFTRWCQIGGLWAFIALHGSFGLIGFCLRQFEIARLVGIRPYNAIAFSGPIAVFVSVFLMYPLGQASWFFAPSFGVAAIFRFLLFLQGFHNWTLNPFHMMGVAGILGGALLCAIHGATVQNTLFEDGDAADTFRAFTPTQSEETYSMVTANRFWSQIFGVAFSNKRWLHFFMLFVPVTGLWTSAFGIVGLALNLRAYDFVSQELRAAEDPEFETFYTKNILLNEGIRAWMAAQDQPHENFIFPEEVLPRGNAL.

The helical transmembrane segment at 39–59 threads the bilayer; it reads CSYLALGGWLTGTTFVTSWYT. His-116 is a chlorophyll a binding site. A helical transmembrane segment spans residues 123–139; sequence GFCLRQFEIARLVGIRP. Pheophytin a-binding residues include Gln-128 and Asn-141. A helical transmembrane segment spans residues 151 to 164; it reads VFVSVFLMYPLGQA. His-196 lines the chlorophyll a pocket. Residues 206-226 traverse the membrane as a helical segment; sequence GALLCAIHGATVQNTLFEDGD. A plastoquinone contacts are provided by His-213 and Phe-260. His-213 is a binding site for Fe cation. His-267 is a Fe cation binding site. Residues 277-293 form a helical membrane-spanning segment; it reads GLWTSAFGIVGLALNLR.

Belongs to the reaction center PufL/M/PsbA/D family. PSII is composed of 1 copy each of membrane proteins PsbA, PsbB, PsbC, PsbD, PsbE, PsbF, PsbH, PsbI, PsbJ, PsbK, PsbL, PsbM, PsbT, PsbX, PsbY, PsbZ, Psb30/Ycf12, at least 3 peripheral proteins of the oxygen-evolving complex and a large number of cofactors. It forms dimeric complexes. The cofactor is The D1/D2 heterodimer binds P680, chlorophylls that are the primary electron donor of PSII, and subsequent electron acceptors. It shares a non-heme iron and each subunit binds pheophytin, quinone, additional chlorophylls, carotenoids and lipids. There is also a Cl(-1) ion associated with D1 and D2, which is required for oxygen evolution. The PSII complex binds additional chlorophylls, carotenoids and specific lipids..

Its subcellular location is the plastid. The protein localises to the chloroplast thylakoid membrane. It catalyses the reaction 2 a plastoquinone + 4 hnu + 2 H2O = 2 a plastoquinol + O2. Functionally, photosystem II (PSII) is a light-driven water:plastoquinone oxidoreductase that uses light energy to abstract electrons from H(2)O, generating O(2) and a proton gradient subsequently used for ATP formation. It consists of a core antenna complex that captures photons, and an electron transfer chain that converts photonic excitation into a charge separation. The D1/D2 (PsbA/PsbD) reaction center heterodimer binds P680, the primary electron donor of PSII as well as several subsequent electron acceptors. D2 is needed for assembly of a stable PSII complex. The polypeptide is Photosystem II D2 protein (Gracilaria tenuistipitata var. liui (Red alga)).